A 120-amino-acid chain; its full sequence is Ribosome-binding factor A (120 aa).

It belongs to the RbfA family. Monomer. Binds 30S ribosomal subunits, but not 50S ribosomal subunits or 70S ribosomes.

Its subcellular location is the cytoplasm. One of several proteins that assist in the late maturation steps of the functional core of the 30S ribosomal subunit. Associates with free 30S ribosomal subunits (but not with 30S subunits that are part of 70S ribosomes or polysomes). Required for efficient processing of 16S rRNA. May interact with the 5'-terminal helix region of 16S rRNA. The protein is Ribosome-binding factor A of Lactobacillus delbrueckii subsp. bulgaricus (strain ATCC 11842 / DSM 20081 / BCRC 10696 / JCM 1002 / NBRC 13953 / NCIMB 11778 / NCTC 12712 / WDCM 00102 / Lb 14).